The primary structure comprises 177 residues: Large ribosomal subunit protein uL6 (177 aa).

This sequence belongs to the universal ribosomal protein uL6 family. Part of the 50S ribosomal subunit.

This protein binds to the 23S rRNA, and is important in its secondary structure. It is located near the subunit interface in the base of the L7/L12 stalk, and near the tRNA binding site of the peptidyltransferase center. The protein is Large ribosomal subunit protein uL6 of Methylorubrum populi (strain ATCC BAA-705 / NCIMB 13946 / BJ001) (Methylobacterium populi).